A 93-amino-acid polypeptide reads, in one-letter code: PqqA binding protein (93 aa).

It belongs to the PqqD family. Monomer. Interacts with PqqE.

It participates in cofactor biosynthesis; pyrroloquinoline quinone biosynthesis. In terms of biological role, functions as a PqqA binding protein and presents PqqA to PqqE, in the pyrroloquinoline quinone (PQQ) biosynthetic pathway. The polypeptide is PqqA binding protein (Methylococcus capsulatus (strain ATCC 33009 / NCIMB 11132 / Bath)).